The following is a 223-amino-acid chain: Imidazoleglycerol-phosphate dehydratase (223 aa).

It belongs to the imidazoleglycerol-phosphate dehydratase family.

It carries out the reaction D-erythro-1-(imidazol-4-yl)glycerol 3-phosphate = 3-(imidazol-4-yl)-2-oxopropyl phosphate + H2O. The protein operates within amino-acid biosynthesis; L-histidine biosynthesis; L-histidine from 5-phospho-alpha-D-ribose 1-diphosphate: step 6/9. This is Imidazoleglycerol-phosphate dehydratase (HIS3) from Torulaspora delbrueckii (Yeast).